Here is a 487-residue protein sequence, read N- to C-terminus: Cytochrome P450 2C5 (487 aa).

Cysteine 432 is a heme binding site.

It belongs to the cytochrome P450 family. Requires heme as cofactor.

It is found in the endoplasmic reticulum membrane. Its subcellular location is the microsome membrane. It carries out the reaction an organic molecule + reduced [NADPH--hemoprotein reductase] + O2 = an alcohol + oxidized [NADPH--hemoprotein reductase] + H2O + H(+). Its function is as follows. Cytochromes P450 are a group of heme-thiolate monooxygenases. In liver microsomes, this enzyme is involved in an NADPH-dependent electron transport pathway. It oxidizes a variety of structurally unrelated compounds, including steroids, fatty acids, and xenobiotics. The chain is Cytochrome P450 2C5 (CYP2C5) from Oryctolagus cuniculus (Rabbit).